Reading from the N-terminus, the 351-residue chain is D-threonate 4-phosphate dehydrogenase (351 aa).

Substrate-binding residues include H147 and T148. 3 residues coordinate a divalent metal cation: H177, H221, and H276. 3 residues coordinate substrate: K284, N293, and R302.

It belongs to the PdxA family. PdxA2 subfamily. In terms of assembly, homodimer. It depends on a divalent metal cation as a cofactor.

It carries out the reaction 4-O-phospho-D-threonate + NAD(+) = dihydroxyacetone phosphate + CO2 + NADH. Catalyzes the NAD-dependent oxidation and subsequent decarboxylation of D-threonate 4-phosphate to produce dihydroxyacetone phosphate (DHAP). Can also use 4-hydroxy-L-threonine 4-phosphate as substrate. In Bordetella bronchiseptica (strain ATCC BAA-588 / NCTC 13252 / RB50) (Alcaligenes bronchisepticus), this protein is D-threonate 4-phosphate dehydrogenase.